Consider the following 327-residue polypeptide: Thiamine-monophosphate kinase (327 aa).

Mg(2+) contacts are provided by aspartate 30, serine 45, serine 46, and aspartate 47. Histidine 54 contacts substrate. Position 76 (aspartate 76) interacts with Mg(2+). Residues tyrosine 106, 123–124 (GD), and arginine 149 each bind ATP. Position 124 (aspartate 124) interacts with Mg(2+). Residue aspartate 221 participates in Mg(2+) binding. Position 223 (serine 223) interacts with ATP. Aspartate 224 is a binding site for Mg(2+). 2 residues coordinate substrate: glutamate 268 and phenylalanine 321.

The protein belongs to the thiamine-monophosphate kinase family.

It carries out the reaction thiamine phosphate + ATP = thiamine diphosphate + ADP. Its pathway is cofactor biosynthesis; thiamine diphosphate biosynthesis; thiamine diphosphate from thiamine phosphate: step 1/1. Catalyzes the ATP-dependent phosphorylation of thiamine-monophosphate (TMP) to form thiamine-pyrophosphate (TPP), the active form of vitamin B1. The sequence is that of Thiamine-monophosphate kinase from Synechococcus elongatus (strain ATCC 33912 / PCC 7942 / FACHB-805) (Anacystis nidulans R2).